A 420-amino-acid chain; its full sequence is Protein Rv2184c (420 aa).

Belongs to the arsA ATPase family.

The polypeptide is Protein Rv2184c (Mycobacterium tuberculosis (strain ATCC 25618 / H37Rv)).